A 314-amino-acid polypeptide reads, in one-letter code: 4-hydroxy-3-methylbut-2-enyl diphosphate reductase (314 aa).

Cysteine 12 provides a ligand contact to [4Fe-4S] cluster. (2E)-4-hydroxy-3-methylbut-2-enyl diphosphate-binding residues include histidine 41 and histidine 74. Residues histidine 41 and histidine 74 each contribute to the dimethylallyl diphosphate site. Isopentenyl diphosphate is bound by residues histidine 41 and histidine 74. Cysteine 96 contributes to the [4Fe-4S] cluster binding site. Histidine 124 provides a ligand contact to (2E)-4-hydroxy-3-methylbut-2-enyl diphosphate. Histidine 124 is a binding site for dimethylallyl diphosphate. Residue histidine 124 coordinates isopentenyl diphosphate. Glutamate 126 serves as the catalytic Proton donor. Threonine 167 serves as a coordination point for (2E)-4-hydroxy-3-methylbut-2-enyl diphosphate. Cysteine 197 serves as a coordination point for [4Fe-4S] cluster. The (2E)-4-hydroxy-3-methylbut-2-enyl diphosphate site is built by serine 225, serine 226, asparagine 227, and serine 269. Residues serine 225, serine 226, asparagine 227, and serine 269 each contribute to the dimethylallyl diphosphate site. Residues serine 225, serine 226, asparagine 227, and serine 269 each contribute to the isopentenyl diphosphate site.

The protein belongs to the IspH family. The cofactor is [4Fe-4S] cluster.

It carries out the reaction isopentenyl diphosphate + 2 oxidized [2Fe-2S]-[ferredoxin] + H2O = (2E)-4-hydroxy-3-methylbut-2-enyl diphosphate + 2 reduced [2Fe-2S]-[ferredoxin] + 2 H(+). The catalysed reaction is dimethylallyl diphosphate + 2 oxidized [2Fe-2S]-[ferredoxin] + H2O = (2E)-4-hydroxy-3-methylbut-2-enyl diphosphate + 2 reduced [2Fe-2S]-[ferredoxin] + 2 H(+). It participates in isoprenoid biosynthesis; dimethylallyl diphosphate biosynthesis; dimethylallyl diphosphate from (2E)-4-hydroxy-3-methylbutenyl diphosphate: step 1/1. The protein operates within isoprenoid biosynthesis; isopentenyl diphosphate biosynthesis via DXP pathway; isopentenyl diphosphate from 1-deoxy-D-xylulose 5-phosphate: step 6/6. Catalyzes the conversion of 1-hydroxy-2-methyl-2-(E)-butenyl 4-diphosphate (HMBPP) into a mixture of isopentenyl diphosphate (IPP) and dimethylallyl diphosphate (DMAPP). Acts in the terminal step of the DOXP/MEP pathway for isoprenoid precursor biosynthesis. This is 4-hydroxy-3-methylbut-2-enyl diphosphate reductase from Aliivibrio fischeri (strain ATCC 700601 / ES114) (Vibrio fischeri).